The following is a 373-amino-acid chain: Queuine tRNA-ribosyltransferase (373 aa).

The active-site Proton acceptor is Asp89. Residues 89–93 (DSGGF), Asp143, Gln192, and Gly220 contribute to the substrate site. The RNA binding stretch occupies residues 251-257 (GVGTPED). Asp270 functions as the Nucleophile in the catalytic mechanism. The interval 275-279 (TRNAR) is RNA binding; important for wobble base 34 recognition. Cys308, Cys310, Cys313, and His339 together coordinate Zn(2+).

This sequence belongs to the queuine tRNA-ribosyltransferase family. As to quaternary structure, homodimer. Within each dimer, one monomer is responsible for RNA recognition and catalysis, while the other monomer binds to the replacement base PreQ1. It depends on Zn(2+) as a cofactor.

It catalyses the reaction 7-aminomethyl-7-carbaguanine + guanosine(34) in tRNA = 7-aminomethyl-7-carbaguanosine(34) in tRNA + guanine. The protein operates within tRNA modification; tRNA-queuosine biosynthesis. Its function is as follows. Catalyzes the base-exchange of a guanine (G) residue with the queuine precursor 7-aminomethyl-7-deazaguanine (PreQ1) at position 34 (anticodon wobble position) in tRNAs with GU(N) anticodons (tRNA-Asp, -Asn, -His and -Tyr). Catalysis occurs through a double-displacement mechanism. The nucleophile active site attacks the C1' of nucleotide 34 to detach the guanine base from the RNA, forming a covalent enzyme-RNA intermediate. The proton acceptor active site deprotonates the incoming PreQ1, allowing a nucleophilic attack on the C1' of the ribose to form the product. After dissociation, two additional enzymatic reactions on the tRNA convert PreQ1 to queuine (Q), resulting in the hypermodified nucleoside queuosine (7-(((4,5-cis-dihydroxy-2-cyclopenten-1-yl)amino)methyl)-7-deazaguanosine). The protein is Queuine tRNA-ribosyltransferase of Aliarcobacter butzleri (strain RM4018) (Arcobacter butzleri).